We begin with the raw amino-acid sequence, 460 residues long: EPD1-interacting receptor-like cytoplasmic serine/threonine-protein kinase 5D (460 aa).

The Protein kinase domain occupies 83-364 (FSSANFLGEG…DVVNILEPLL (282 aa)). ATP is bound by residues 89-97 (LGEGGFGPV) and Lys118. A phosphotyrosine mark is found at Tyr163 and Tyr165. Asp213 serves as the catalytic Proton acceptor.

It belongs to the protein kinase superfamily. Ser/Thr protein kinase family. Interacts with the V.dahliae elicitor EPD1 (AC G2WWH6). In terms of processing, phosphorylated at Tyr-163 and Tyr-165 in the presence of pathogen-associated molecular patterns (PAMPs); this triggers the expression of pathogenesis-related genes. As to expression, mostly expressed in roots and, to a lesser extent, in leaves.

The protein localises to the cell membrane. The enzyme catalyses L-seryl-[protein] + ATP = O-phospho-L-seryl-[protein] + ADP + H(+). The catalysed reaction is L-threonyl-[protein] + ATP = O-phospho-L-threonyl-[protein] + ADP + H(+). Its function is as follows. Required for pathogen-associated molecular pattern (PAMP, e.g. chitin and flg22)-triggered immunity (PTI) involving reactive oxygen species (ROS) accumulation and triggering plant defense, including defense-related gene expression (e.g. PR1 and LOX). Ensures specific recognition of the EPD1 effector of Verticillium dahliae, resulting in a hypersensitive response known as effector-triggered immunity (ETI), characterized by the activation of programmed cell death to limit infection by the pathogen. Priming plants with the incompatible pathogen V.dahliae leads to an increased resistance to compatible pathogens, as a result of systemic acquired resistance (SAR). In Gossypium barbadense (Sea Island cotton), this protein is EPD1-interacting receptor-like cytoplasmic serine/threonine-protein kinase 5D.